The following is a 369-amino-acid chain: FAD-dependent monooxygenase FPY4 (369 aa).

It belongs to the aromatic-ring hydroxylase family. FAD serves as cofactor.

It participates in secondary metabolite biosynthesis. Its function is as follows. FAD-dependent monooxygenase; part of the gene cluster that mediates the biosynthesis of the gamma-pyrones fusapyrone (FPY) and deoxyfusapyrone (dFPY). FPY is an undecaketide and thus likely synthesized by the polyketide synthase FPY1 from acetyl-CoA functioning as starter unit and the addition of 10 malonyl-CoA extender units by successive Claisen-condensations. Next to this, FPY shares some rare features: C-glycosylated 4-deoxyglucose at C-3, a gem-dimethyl group at C-13, and an alpha-beta to beta-gamma double bond shift at C-20. During FPY biosynthesis mono-C-methyl groups are transferred to the tetra-, penta-, hexa- and heptaketide, while two C-methyl groups are transferred to the nonaketide, suggesting that the CMet domain is programmed to selectively catalyze two successive C-alpha-methylation reactions of the nonaketide, while other alpha-carbons are non- or mono-methylated only. While the origin of the 4'-deoxyglucose moiety remains opaque, its transfer to C-3 is most likely mediated by the C-glycosyltransferase FPY2. Next to this, the hydroxyl group present at C-33 and discriminating between FPY and dFPY, is likely to be installed by the cytochrome P450 monooxygenase FPY7. No putative function can be predicted for the remaining genes FPY3-FPY6. This is FAD-dependent monooxygenase FPY4 from Fusarium mangiferae (Mango malformation disease fungus).